Here is a 245-residue protein sequence, read N- to C-terminus: Adenylate kinase (245 aa).

An ATP-binding site is contributed by 15 to 20 (GSGKGT). Positions 35 to 64 (SSGDLLRDAVSKDTPLSQEIKSYLDQGKLL) are NMP. Residues Ser-36, Arg-41, 62–64 (KLL), 103–106 (GFPR), and Gln-110 contribute to the AMP site. The LID stretch occupies residues 143–176 (SRYICPACQGIYNEQQGFSSCPKCSVELIRRSDD). Arg-144 provides a ligand contact to ATP. Residues Cys-147 and Cys-150 each contribute to the Zn(2+) site. Residue 153–154 (IY) coordinates ATP. Zn(2+)-binding residues include Cys-163 and Cys-166. The AMP site is built by Arg-173 and Arg-184. ATP is bound at residue Ala-212.

Belongs to the adenylate kinase family. Monomer.

The protein resides in the cytoplasm. It catalyses the reaction AMP + ATP = 2 ADP. The protein operates within purine metabolism; AMP biosynthesis via salvage pathway; AMP from ADP: step 1/1. Catalyzes the reversible transfer of the terminal phosphate group between ATP and AMP. Plays an important role in cellular energy homeostasis and in adenine nucleotide metabolism. This chain is Adenylate kinase, found in Chlamydia trachomatis serovar A (strain ATCC VR-571B / DSM 19440 / HAR-13).